Here is a 161-residue protein sequence, read N- to C-terminus: TRAF-interacting protein with FHA domain-containing protein B (161 aa).

Residues 36–91 form the FHA domain; the sequence is LLLGRGQDAHLQLQLPRLSRRHLSLEPYLEKGSALLAFCLKALSRKGCVWVNGLTL.

As to quaternary structure, interacts with TIFA.

Its function is as follows. Inhibits TIFA-mediated TRAF6 activation possibly by inducing a conformational change in TIFA. This chain is TRAF-interacting protein with FHA domain-containing protein B, found in Homo sapiens (Human).